Consider the following 92-residue polypeptide: MTRSLKKNPFVANRLLRKIDNLNTKAEKEIIITWSRASTIIPTMIGHTIAIHNGKEHLPIYITDRMVGHKLGEFAPTLNFRGHAKSDNRSRR.

Belongs to the universal ribosomal protein uS19 family.

Its subcellular location is the plastid. The protein localises to the chloroplast. Protein S19 forms a complex with S13 that binds strongly to the 16S ribosomal RNA. The polypeptide is Small ribosomal subunit protein uS19c (Daucus carota (Wild carrot)).